The chain runs to 185 residues: Ribosome-recycling factor (185 aa).

It belongs to the RRF family.

It localises to the cytoplasm. Functionally, responsible for the release of ribosomes from messenger RNA at the termination of protein biosynthesis. May increase the efficiency of translation by recycling ribosomes from one round of translation to another. The sequence is that of Ribosome-recycling factor from Pseudomonas paraeruginosa (strain DSM 24068 / PA7) (Pseudomonas aeruginosa (strain PA7)).